The sequence spans 133 residues: Ribosome-binding factor A (133 aa).

Belongs to the RbfA family. In terms of assembly, monomer. Binds 30S ribosomal subunits, but not 50S ribosomal subunits or 70S ribosomes.

The protein resides in the cytoplasm. One of several proteins that assist in the late maturation steps of the functional core of the 30S ribosomal subunit. Associates with free 30S ribosomal subunits (but not with 30S subunits that are part of 70S ribosomes or polysomes). Required for efficient processing of 16S rRNA. May interact with the 5'-terminal helix region of 16S rRNA. The polypeptide is Ribosome-binding factor A (Synechocystis sp. (strain ATCC 27184 / PCC 6803 / Kazusa)).